We begin with the raw amino-acid sequence, 436 residues long: Trigger factor (436 aa).

Residues Asp163–Pro248 enclose the PPIase FKBP-type domain.

The protein belongs to the FKBP-type PPIase family. Tig subfamily.

It is found in the cytoplasm. The catalysed reaction is [protein]-peptidylproline (omega=180) = [protein]-peptidylproline (omega=0). Functionally, involved in protein export. Acts as a chaperone by maintaining the newly synthesized protein in an open conformation. Functions as a peptidyl-prolyl cis-trans isomerase. In Bordetella avium (strain 197N), this protein is Trigger factor.